The sequence spans 614 residues: Dihydroxy-acid dehydratase (614 aa).

Asp-81 is a binding site for Mg(2+). Cys-122 lines the [2Fe-2S] cluster pocket. Mg(2+) contacts are provided by Asp-123 and Lys-124. Lys-124 carries the post-translational modification N6-carboxylysine. Cys-193 contributes to the [2Fe-2S] cluster binding site. Glu-489 lines the Mg(2+) pocket. Ser-515 acts as the Proton acceptor in catalysis.

This sequence belongs to the IlvD/Edd family. Homodimer. [2Fe-2S] cluster is required as a cofactor. Mg(2+) serves as cofactor.

It carries out the reaction (2R)-2,3-dihydroxy-3-methylbutanoate = 3-methyl-2-oxobutanoate + H2O. The catalysed reaction is (2R,3R)-2,3-dihydroxy-3-methylpentanoate = (S)-3-methyl-2-oxopentanoate + H2O. Its pathway is amino-acid biosynthesis; L-isoleucine biosynthesis; L-isoleucine from 2-oxobutanoate: step 3/4. It participates in amino-acid biosynthesis; L-valine biosynthesis; L-valine from pyruvate: step 3/4. In terms of biological role, functions in the biosynthesis of branched-chain amino acids. Catalyzes the dehydration of (2R,3R)-2,3-dihydroxy-3-methylpentanoate (2,3-dihydroxy-3-methylvalerate) into 2-oxo-3-methylpentanoate (2-oxo-3-methylvalerate) and of (2R)-2,3-dihydroxy-3-methylbutanoate (2,3-dihydroxyisovalerate) into 2-oxo-3-methylbutanoate (2-oxoisovalerate), the penultimate precursor to L-isoleucine and L-valine, respectively. This is Dihydroxy-acid dehydratase from Saccharophagus degradans (strain 2-40 / ATCC 43961 / DSM 17024).